Reading from the N-terminus, the 299-residue chain is Ribosomal RNA small subunit methyltransferase H (299 aa).

S-adenosyl-L-methionine is bound by residues 36–38 (GGH), Asp55, Asp103, and Gln110. Composition is skewed to basic and acidic residues over residues 268–282 (KPVR…ENPR) and 289–299 (RAAERIEKGGD). Residues 268 to 299 (KPVRPSEEEIRENPRARSGRLRAAERIEKGGD) are disordered.

It belongs to the methyltransferase superfamily. RsmH family.

It localises to the cytoplasm. The enzyme catalyses cytidine(1402) in 16S rRNA + S-adenosyl-L-methionine = N(4)-methylcytidine(1402) in 16S rRNA + S-adenosyl-L-homocysteine + H(+). Its function is as follows. Specifically methylates the N4 position of cytidine in position 1402 (C1402) of 16S rRNA. This Thermotoga sp. (strain RQ2) protein is Ribosomal RNA small subunit methyltransferase H.